A 341-amino-acid chain; its full sequence is S-adenosylmethionine:tRNA ribosyltransferase-isomerase (341 aa).

The protein belongs to the QueA family. As to quaternary structure, monomer.

Its subcellular location is the cytoplasm. The catalysed reaction is 7-aminomethyl-7-carbaguanosine(34) in tRNA + S-adenosyl-L-methionine = epoxyqueuosine(34) in tRNA + adenine + L-methionine + 2 H(+). It functions in the pathway tRNA modification; tRNA-queuosine biosynthesis. In terms of biological role, transfers and isomerizes the ribose moiety from AdoMet to the 7-aminomethyl group of 7-deazaguanine (preQ1-tRNA) to give epoxyqueuosine (oQ-tRNA). This Desulforamulus reducens (strain ATCC BAA-1160 / DSM 100696 / MI-1) (Desulfotomaculum reducens) protein is S-adenosylmethionine:tRNA ribosyltransferase-isomerase.